A 258-amino-acid polypeptide reads, in one-letter code: Small ribosomal subunit protein mS40 (258 aa).

The N-terminal 35 residues, 1-35 (MAASVLNTLLRRLPMLSLFRGAHRVQVPLQTLCTK), are a transit peptide targeting the mitochondrion. S38 and S49 each carry phosphoserine. The disordered stretch occupies residues 218–258 (RLYQGHLREESGPPPESMPKMPPTAPAEASFTGQTDPQSAL). Positions 229–242 (GPPPESMPKMPPTA) are enriched in pro residues. Residues 248 to 258 (FTGQTDPQSAL) are compositionally biased toward polar residues.

It belongs to the bacterial ribosomal protein bS18 family. Mitochondrion-specific ribosomal protein mS40 subfamily. In terms of assembly, component of the mitochondrial ribosome small subunit (28S) which comprises a 12S rRNA and about 30 distinct proteins.

It localises to the mitochondrion. This Macaca mulatta (Rhesus macaque) protein is Small ribosomal subunit protein mS40 (MRPS18B).